The primary structure comprises 158 residues: NAD(P)H-quinone oxidoreductase subunit J, chloroplastic (158 aa).

This sequence belongs to the complex I 30 kDa subunit family. As to quaternary structure, NDH is composed of at least 16 different subunits, 5 of which are encoded in the nucleus.

Its subcellular location is the plastid. The protein resides in the chloroplast thylakoid membrane. The enzyme catalyses a plastoquinone + NADH + (n+1) H(+)(in) = a plastoquinol + NAD(+) + n H(+)(out). It carries out the reaction a plastoquinone + NADPH + (n+1) H(+)(in) = a plastoquinol + NADP(+) + n H(+)(out). Functionally, NDH shuttles electrons from NAD(P)H:plastoquinone, via FMN and iron-sulfur (Fe-S) centers, to quinones in the photosynthetic chain and possibly in a chloroplast respiratory chain. The immediate electron acceptor for the enzyme in this species is believed to be plastoquinone. Couples the redox reaction to proton translocation, and thus conserves the redox energy in a proton gradient. The sequence is that of NAD(P)H-quinone oxidoreductase subunit J, chloroplastic from Nuphar advena (Common spatterdock).